The following is a 174-amino-acid chain: Crossover junction endodeoxyribonuclease RuvC (174 aa).

Catalysis depends on residues D8, E67, and D139. Positions 8, 67, and 139 each coordinate Mg(2+).

It belongs to the RuvC family. Homodimer which binds Holliday junction (HJ) DNA. The HJ becomes 2-fold symmetrical on binding to RuvC with unstacked arms; it has a different conformation from HJ DNA in complex with RuvA. In the full resolvosome a probable DNA-RuvA(4)-RuvB(12)-RuvC(2) complex forms which resolves the HJ. Requires Mg(2+) as cofactor.

It localises to the cytoplasm. The enzyme catalyses Endonucleolytic cleavage at a junction such as a reciprocal single-stranded crossover between two homologous DNA duplexes (Holliday junction).. In terms of biological role, the RuvA-RuvB-RuvC complex processes Holliday junction (HJ) DNA during genetic recombination and DNA repair. Endonuclease that resolves HJ intermediates. Cleaves cruciform DNA by making single-stranded nicks across the HJ at symmetrical positions within the homologous arms, yielding a 5'-phosphate and a 3'-hydroxyl group; requires a central core of homology in the junction. The consensus cleavage sequence is 5'-(A/T)TT(C/G)-3'. Cleavage occurs on the 3'-side of the TT dinucleotide at the point of strand exchange. HJ branch migration catalyzed by RuvA-RuvB allows RuvC to scan DNA until it finds its consensus sequence, where it cleaves and resolves the cruciform DNA. This chain is Crossover junction endodeoxyribonuclease RuvC, found in Pseudomonas putida (strain W619).